We begin with the raw amino-acid sequence, 298 residues long: Protease HtpX homolog (298 aa).

Helical transmembrane passes span 16 to 36 (VMFG…YLFW) and 38 to 58 (SWVS…LIMI). Histidine 144 is a Zn(2+) binding site. Residue glutamate 145 is part of the active site. Histidine 148 is a binding site for Zn(2+). 2 consecutive transmembrane segments (helical) span residues 159–179 (IALA…NWFW) and 197–217 (IIGL…ASIA). Glutamate 226 is a binding site for Zn(2+).

Belongs to the peptidase M48B family. Zn(2+) serves as cofactor.

It localises to the cell membrane. This chain is Protease HtpX homolog, found in Levilactobacillus brevis (strain ATCC 367 / BCRC 12310 / CIP 105137 / JCM 1170 / LMG 11437 / NCIMB 947 / NCTC 947) (Lactobacillus brevis).